The chain runs to 560 residues: Vanillyl-alcohol oxidase (560 aa).

Positions 67–272 (DYFLASAIVA…TKIGIWLMPN (206 aa)) constitute an FAD-binding PCMH-type domain. Tyrosine 108 is an active-site residue. A Tele-8alpha-FAD histidine modification is found at histidine 422. Residues tyrosine 503 and arginine 504 contribute to the active site.

The protein to bacterial flavocytochrome p-cresol methyl hydroxylase. In terms of assembly, homooctamer (tetramer of tightly interacting dimers). FAD is required as a cofactor.

It localises to the peroxisome. Its subcellular location is the cytoplasm. The enzyme catalyses 4-hydroxy-3-methoxy-benzenemethanol + O2 = vanillin + H2O2. Competitively inhibited by cinnamyl and coniferyl alcohols and by isoeugenol. Catalyzes the conversion of vanillin alcohol to vanillin, and also the conversion of a wide range of phenolic compounds bearing side chains of variable size at the para position of the aromatic ring. Crucial for the degradation of the secondary metabolites derived from the degradation of the lignin. Catalyzes besides the oxidation of 4-hydroxybenzyl alcohols, the oxidative deamination of 4-hydroxybenzylamines, the oxidative demethylation of 4-(methoxy-methyl)phenols and the oxidative hydration of 4-allylphenols. Most active with 4-allylphenols. The protein is Vanillyl-alcohol oxidase (VAOA) of Penicillium simplicissimum.